The chain runs to 1079 residues: Integrator complex subunit 3 homolog (1079 aa).

Disordered regions lie at residues 539 to 574 (ESSE…DDLP), 925 to 949 (YPSS…TPSA), and 1010 to 1079 (AVGR…NDSD). Low complexity predominate over residues 938 to 949 (KGSSAASSTPSA). A phosphoserine mark is found at Ser-1049, Ser-1050, Ser-1054, and Ser-1055. The segment covering 1062–1073 (HKITQAAKKRKK) has biased composition (basic residues).

It belongs to the Integrator subunit 3 family. As to quaternary structure, belongs to the multiprotein complex Integrator, at least composed of IntS1, IntS2, IntS3, IntS4, omd/IntS5, IntS6, defl/IntS7, IntS8, IntS9, IntS10, IntS11, IntS12, asun/IntS13, IntS14 and IntS15. The core complex associates with protein phosphatase 2A subunits mts/PP2A and Pp2A-29B, to form the Integrator-PP2A (INTAC) complex.

The protein localises to the nucleus. It is found in the cytoplasm. Its function is as follows. Component of the integrator complex, a multiprotein complex that terminates RNA polymerase II (Pol II) transcription in the promoter-proximal region of genes. The integrator complex provides a quality checkpoint during transcription elongation by driving premature transcription termination of transcripts that are unfavorably configured for transcriptional elongation: the complex terminates transcription by (1) catalyzing dephosphorylation of the C-terminal domain (CTD) of Pol II subunit Polr2A/Rbp1 and Spt5, and (2) degrading the exiting nascent RNA transcript via endonuclease activity. The integrator complex is also involved in the 3'-end processing of the U7 snRNA, and also the spliceosomal snRNAs U1, U2, U4 and U5. The protein is Integrator complex subunit 3 homolog (IntS3) of Drosophila virilis (Fruit fly).